Consider the following 847-residue polypeptide: Acyl-homoserine lactone acylase QuiP (847 aa).

The signal sequence occupies residues 1–26; the sequence is MASPAFMRFLPRCGAAAAFGTLLGLA. Serine 265 acts as the Nucleophile in catalysis.

Belongs to the peptidase S45 family. In terms of assembly, heterodimer of an alpha subunit and a beta subunit processed from the same precursor.

Its subcellular location is the periplasm. It catalyses the reaction an N-acyl-L-homoserine lactone + H2O = L-homoserine lactone + a carboxylate. Catalyzes the deacylation of acyl-homoserine lactone (AHL or acyl-HSL), releasing homoserine lactone (HSL) and the corresponding fatty acid. Possesses a specificity for the degradation of long-chain acyl-HSLs (side chains of seven or more carbons in length). Appears to be the acyl-HSL acylase that underlies the ability of P.aeruginosa to degrade and utilize certain acyl-HSLs as growth nutrients, including one of its own quorum signals, 3-oxo-C12-HSL. Is thought to have a role in quorum quenching. In Pseudomonas aeruginosa (strain ATCC 15692 / DSM 22644 / CIP 104116 / JCM 14847 / LMG 12228 / 1C / PRS 101 / PAO1), this protein is Acyl-homoserine lactone acylase QuiP (quiP).